The chain runs to 366 residues: Chorismate synthase (366 aa).

Arginine 48 and arginine 54 together coordinate NADP(+). Residues arginine 125–serine 127, asparagine 238–alanine 239, glycine 278, lysine 293–serine 297, and arginine 319 contribute to the FMN site.

It belongs to the chorismate synthase family. Homotetramer. Requires FMNH2 as cofactor.

It carries out the reaction 5-O-(1-carboxyvinyl)-3-phosphoshikimate = chorismate + phosphate. It participates in metabolic intermediate biosynthesis; chorismate biosynthesis; chorismate from D-erythrose 4-phosphate and phosphoenolpyruvate: step 7/7. In terms of biological role, catalyzes the anti-1,4-elimination of the C-3 phosphate and the C-6 proR hydrogen from 5-enolpyruvylshikimate-3-phosphate (EPSP) to yield chorismate, which is the branch point compound that serves as the starting substrate for the three terminal pathways of aromatic amino acid biosynthesis. This reaction introduces a second double bond into the aromatic ring system. The sequence is that of Chorismate synthase from Herminiimonas arsenicoxydans.